A 150-amino-acid polypeptide reads, in one-letter code: Putative pre-16S rRNA nuclease (150 aa).

It belongs to the YqgF nuclease family.

The protein localises to the cytoplasm. Could be a nuclease involved in processing of the 5'-end of pre-16S rRNA. This Syntrophus aciditrophicus (strain SB) protein is Putative pre-16S rRNA nuclease.